A 580-amino-acid chain; its full sequence is CDKN2A-interacting protein (580 aa).

The residue at position 2 (A2) is an N-acetylalanine. Positions V19–S133 constitute an XRN2-binding (XTBD) domain. A disordered region spans residues G129–S356. The residue at position 131 (S131) is a Phosphoserine. Basic and acidic residues predominate over residues E155–R167. Residues A168–I179 show a composition bias toward polar residues. K184 is covalently cross-linked (Glycyl lysine isopeptide (Lys-Gly) (interchain with G-Cter in SUMO1)). Positions S185 to G228 are enriched in low complexity. Residues S231–G240 show a composition bias toward basic and acidic residues. S241 carries the phosphoserine modification. Residues L248–P269 show a composition bias toward polar residues. Composition is skewed to low complexity over residues L274 to E313 and S321 to S356. T346 is modified (phosphothreonine). Phosphoserine is present on S389. The DRBM domain maps to N462 to K537.

It belongs to the CARF family. As to quaternary structure, interacts with CDKN2A/p14ARF, p53/TP53 and MDM2. Interacts with CHEK2 and MAPK3. Interacts with XRN2. In terms of processing, may be ubiquitinated. As to expression, ubiquitously expressed.

It localises to the nucleus. The protein localises to the nucleoplasm. Regulates DNA damage response in a dose-dependent manner through a number of signaling pathways involved in cell proliferation, apoptosis and senescence. The chain is CDKN2A-interacting protein (CDKN2AIP) from Homo sapiens (Human).